A 180-amino-acid chain; its full sequence is ATP synthase subunit delta (180 aa).

It belongs to the ATPase delta chain family. F-type ATPases have 2 components, F(1) - the catalytic core - and F(0) - the membrane proton channel. F(1) has five subunits: alpha(3), beta(3), gamma(1), delta(1), epsilon(1). F(0) has three main subunits: a(1), b(2) and c(10-14). The alpha and beta chains form an alternating ring which encloses part of the gamma chain. F(1) is attached to F(0) by a central stalk formed by the gamma and epsilon chains, while a peripheral stalk is formed by the delta and b chains.

The protein resides in the cell inner membrane. Functionally, f(1)F(0) ATP synthase produces ATP from ADP in the presence of a proton or sodium gradient. F-type ATPases consist of two structural domains, F(1) containing the extramembraneous catalytic core and F(0) containing the membrane proton channel, linked together by a central stalk and a peripheral stalk. During catalysis, ATP synthesis in the catalytic domain of F(1) is coupled via a rotary mechanism of the central stalk subunits to proton translocation. This protein is part of the stalk that links CF(0) to CF(1). It either transmits conformational changes from CF(0) to CF(1) or is implicated in proton conduction. The protein is ATP synthase subunit delta of Cupriavidus necator (strain ATCC 17699 / DSM 428 / KCTC 22496 / NCIMB 10442 / H16 / Stanier 337) (Ralstonia eutropha).